A 720-amino-acid polypeptide reads, in one-letter code: Phosphoribosylformylglycinamidine synthase subunit PurL (720 aa).

The active site involves histidine 47. 2 residues coordinate ATP: tyrosine 50 and lysine 89. Residue glutamate 91 coordinates Mg(2+). Substrate-binding positions include 92–95 (SHNH) and arginine 114. Histidine 93 (proton acceptor) is an active-site residue. Aspartate 115 contributes to the Mg(2+) binding site. Glutamine 238 is a binding site for substrate. Aspartate 266 provides a ligand contact to Mg(2+). 310–312 (ESQ) provides a ligand contact to substrate. ATP contacts are provided by aspartate 488 and glycine 525. A Mg(2+)-binding site is contributed by asparagine 526. Serine 528 serves as a coordination point for substrate.

The protein belongs to the FGAMS family. Monomer. Part of the FGAM synthase complex composed of 1 PurL, 1 PurQ and 2 PurS subunits.

The protein localises to the cytoplasm. The catalysed reaction is N(2)-formyl-N(1)-(5-phospho-beta-D-ribosyl)glycinamide + L-glutamine + ATP + H2O = 2-formamido-N(1)-(5-O-phospho-beta-D-ribosyl)acetamidine + L-glutamate + ADP + phosphate + H(+). The protein operates within purine metabolism; IMP biosynthesis via de novo pathway; 5-amino-1-(5-phospho-D-ribosyl)imidazole from N(2)-formyl-N(1)-(5-phospho-D-ribosyl)glycinamide: step 1/2. In terms of biological role, part of the phosphoribosylformylglycinamidine synthase complex involved in the purines biosynthetic pathway. Catalyzes the ATP-dependent conversion of formylglycinamide ribonucleotide (FGAR) and glutamine to yield formylglycinamidine ribonucleotide (FGAM) and glutamate. The FGAM synthase complex is composed of three subunits. PurQ produces an ammonia molecule by converting glutamine to glutamate. PurL transfers the ammonia molecule to FGAR to form FGAM in an ATP-dependent manner. PurS interacts with PurQ and PurL and is thought to assist in the transfer of the ammonia molecule from PurQ to PurL. The sequence is that of Phosphoribosylformylglycinamidine synthase subunit PurL from Cereibacter sphaeroides (strain KD131 / KCTC 12085) (Rhodobacter sphaeroides).